We begin with the raw amino-acid sequence, 466 residues long: F-box/WD repeat-containing protein 15 (466 aa).

The F-box domain occupies 1-45 (MAIHLPCLPMMKILSYLDAYSLLQAAQVNKDWNELASSDVLWRKL). WD repeat units lie at residues 101–143 (GYAC…ITWK), 146–185 (EQPA…ALAT), 187–228 (NLKS…LIST), 339–379 (LQCH…KTFQ), and 381–419 (CPEM…LRKC).

In terms of assembly, part of an SCF (SKP1-CUL1-F-box protein) E3 ubiquitin-protein ligase complex. Interacts with KAT7 and SKP1. In terms of tissue distribution, specifically expressed in oocytes from follicles of the medullary region of the ovary.

The protein localises to the cytoplasm. Its subcellular location is the cytosol. It localises to the endoplasmic reticulum. The protein resides in the nucleus. It participates in protein modification; protein ubiquitination. In terms of biological role, substrate-recognition component of an SCF (SKP1-CUL1-F-box protein)-type E3 ubiquitin ligase complex. Promotes KAT7 ubiquitination and subsequent degradation in collaboration with MAP2K1 kinase, leading to reduced histone H3K14 acetylation and increased cell proliferation. The protein is F-box/WD repeat-containing protein 15 of Mus musculus (Mouse).